A 541-amino-acid polypeptide reads, in one-letter code: Developmental and secondary metabolism regulator VEL1 (541 aa).

The Velvet domain maps to Asn26 to Arg220. Residues Glu40–Cys45 carry the Nuclear localization signal motif. 2 disordered regions span residues Asp222–Gln447 and Pro464–Lys483. The segment covering Gly230 to Arg244 has biased composition (basic and acidic residues). A compositionally biased stretch (low complexity) spans Ala289–Leu298. Composition is skewed to pro residues over residues Pro299 to Ala314, Ala345 to Pro355, and Ser425 to Ser439. The PEST stretch occupies residues Met444–Leu472.

It belongs to the velvet family. VeA subfamily. Component of the heterotrimeric velvet complex composed of LAE1, VEL1 and VEL2; VEL1 acting as a bridging protein between LAE1 and VEL2.

It localises to the nucleus. The protein resides in the cytoplasm. Functionally, component of the velvet transcription factor complex that controls sexual/asexual developmental ratio in response to light, promoting sexual development in the darkness while stimulating asexual sporulation under illumination. The velvet complex acts as a global regulator for secondary metabolite gene expression. Controls the expression of the gliotoxin gene cluster. Plays a key role in mycoparasitism. This Hypocrea virens (strain Gv29-8 / FGSC 10586) (Gliocladium virens) protein is Developmental and secondary metabolism regulator VEL1.